The sequence spans 236 residues: uncharacterized protein (236 aa).

The signal sequence occupies residues 1 to 23 (MRRILSILVFAIMLAGCSSNAST). Residues 22–62 (STEKQHAGGEKTVKAEPQSTSSQKDSTDDYQPNSQVTDDRT) form a disordered region. The span at 24–35 (EKQHAGGEKTVK) shows a compositional bias: basic and acidic residues.

This is an uncharacterized protein from Bacillus subtilis (strain 168).